A 541-amino-acid chain; its full sequence is Tripeptidyl aminopeptidase (541 aa).

Positions Met1–Ala36 are cleaved as a signal peptide. A propeptide spanning residues Ala37–Ala39 is cleaved from the precursor. An AB hydrolase-1 domain is found at Gly123–Gly501. Catalysis depends on Ser249, which acts as the Nucleophile. Asp474 is an active-site residue. His503 functions as the Proton donor in the catalytic mechanism.

Belongs to the peptidase S33 family.

The protein localises to the secreted. Functionally, cleaves tripeptides from the N-termini of proteins. Does not cleave mono- or dipeptides, or N-terminally blocked peptides. The chain is Tripeptidyl aminopeptidase from Streptomyces coelicolor (strain ATCC BAA-471 / A3(2) / M145).